The chain runs to 237 residues: Putative HTH-type transcriptional regulator ycf28 (237 aa).

Residues 155 to 228 (KSITNRLISL…KKKVIIHDPI (74 aa)) form the HTH crp-type domain. Positions 188-207 (HKVLAQIIGSNRVSITRIIS) form a DNA-binding region, H-T-H motif.

It localises to the plastid. It is found in the chloroplast. The protein is Putative HTH-type transcriptional regulator ycf28 (ycf28) of Porphyra purpurea (Red seaweed).